The following is a 124-amino-acid chain: Small ribosomal subunit protein uS12 (124 aa).

Asp-89 carries the 3-methylthioaspartic acid modification.

The protein belongs to the universal ribosomal protein uS12 family. Part of the 30S ribosomal subunit. Contacts proteins S8 and S17. May interact with IF1 in the 30S initiation complex.

With S4 and S5 plays an important role in translational accuracy. Functionally, interacts with and stabilizes bases of the 16S rRNA that are involved in tRNA selection in the A site and with the mRNA backbone. Located at the interface of the 30S and 50S subunits, it traverses the body of the 30S subunit contacting proteins on the other side and probably holding the rRNA structure together. The combined cluster of proteins S8, S12 and S17 appears to hold together the shoulder and platform of the 30S subunit. The polypeptide is Small ribosomal subunit protein uS12 (Vibrio atlanticus (strain LGP32) (Vibrio splendidus (strain Mel32))).